The sequence spans 30 residues: GIFLDKLKNFGKDVAGILLKKASCALSGQC.

Cys24 and Cys30 are disulfide-bonded.

In terms of tissue distribution, expressed by the skin glands.

It localises to the secreted. Antimicrobial peptide. The protein is Brevinin-2Rj of Pelophylax ridibundus (Marsh frog).